A 359-amino-acid polypeptide reads, in one-letter code: Innexin inx2 (359 aa).

Over 1–22 (MFDVFGSVKGLLKLDSVCIDNN) the chain is Cytoplasmic. A helical transmembrane segment spans residues 23-43 (LFRLHYKATVIILIAFSLLVT). Topologically, residues 44–109 (SRQYIGDPID…KDEVKYHKYY (66 aa)) are extracellular. A helical transmembrane segment spans residues 110–130 (QWVCFVLFFQAILFYIPRYLW). Residues 131 to 180 (KTWEGGRIKMLVLDLNSPVVNEQSKADRKKLLVDYFATNLHTQNFYAYRF) lie on the Cytoplasmic side of the membrane. The helical transmembrane segment at 181-201 (FICEALNFVNVVGQIYFMDLF) threads the bilayer. At 202–266 (LDGEFTTYGS…VLPLNIVNEK (65 aa)) the chain is on the extracellular side. A helical membrane pass occupies residues 267–287 (IYVFLWFWFVILSVLTGIGLV). Over 288–359 (YRLATAMGPQ…AKKLEGKEIV (72 aa)) the chain is Cytoplasmic.

Belongs to the pannexin family. As to expression, widespread expression in embryo, in anterior and posterior row of neural precursors, midline precursors and in epithelial sheet of stomodeum.

The protein localises to the cell membrane. The protein resides in the cell junction. Its subcellular location is the gap junction. Structural components of the gap junctions. The sequence is that of Innexin inx2 (inx2) from Schistocerca americana (American grasshopper).